Here is a 549-residue protein sequence, read N- to C-terminus: Hydroxylamine reductase (549 aa).

4 residues coordinate [4Fe-4S] cluster: C3, C6, C15, and C21. Residues H244, E268, C313, C405, C433, C458, E492, and K494 each contribute to the hybrid [4Fe-2O-2S] cluster site. C405 is modified (cysteine persulfide).

Belongs to the HCP family. The cofactor is [4Fe-4S] cluster. Hybrid [4Fe-2O-2S] cluster is required as a cofactor.

The protein localises to the cytoplasm. The enzyme catalyses A + NH4(+) + H2O = hydroxylamine + AH2 + H(+). Its function is as follows. Catalyzes the reduction of hydroxylamine to form NH(3) and H(2)O. The chain is Hydroxylamine reductase from Crocosphaera subtropica (strain ATCC 51142 / BH68) (Cyanothece sp. (strain ATCC 51142)).